The sequence spans 320 residues: Aspartate carbamoyltransferase catalytic subunit (320 aa).

Positions 68 and 69 each coordinate carbamoyl phosphate. Lysine 96 is a binding site for L-aspartate. Carbamoyl phosphate contacts are provided by arginine 118, histidine 148, and glutamine 151. Residues arginine 181 and arginine 236 each contribute to the L-aspartate site. Glycine 277 and proline 278 together coordinate carbamoyl phosphate.

The protein belongs to the aspartate/ornithine carbamoyltransferase superfamily. ATCase family. In terms of assembly, heterododecamer (2C3:3R2) of six catalytic PyrB chains organized as two trimers (C3), and six regulatory PyrI chains organized as three dimers (R2).

The enzyme catalyses carbamoyl phosphate + L-aspartate = N-carbamoyl-L-aspartate + phosphate + H(+). It participates in pyrimidine metabolism; UMP biosynthesis via de novo pathway; (S)-dihydroorotate from bicarbonate: step 2/3. Functionally, catalyzes the condensation of carbamoyl phosphate and aspartate to form carbamoyl aspartate and inorganic phosphate, the committed step in the de novo pyrimidine nucleotide biosynthesis pathway. This Polaromonas sp. (strain JS666 / ATCC BAA-500) protein is Aspartate carbamoyltransferase catalytic subunit.